A 174-amino-acid chain; its full sequence is Crossover junction endodeoxyribonuclease RuvC (174 aa).

Active-site residues include Asp-8, Glu-67, and Asp-139. Mg(2+) contacts are provided by Asp-8, Glu-67, and Asp-139.

This sequence belongs to the RuvC family. In terms of assembly, homodimer which binds Holliday junction (HJ) DNA. The HJ becomes 2-fold symmetrical on binding to RuvC with unstacked arms; it has a different conformation from HJ DNA in complex with RuvA. In the full resolvosome a probable DNA-RuvA(4)-RuvB(12)-RuvC(2) complex forms which resolves the HJ. It depends on Mg(2+) as a cofactor.

It localises to the cytoplasm. The enzyme catalyses Endonucleolytic cleavage at a junction such as a reciprocal single-stranded crossover between two homologous DNA duplexes (Holliday junction).. The RuvA-RuvB-RuvC complex processes Holliday junction (HJ) DNA during genetic recombination and DNA repair. Endonuclease that resolves HJ intermediates. Cleaves cruciform DNA by making single-stranded nicks across the HJ at symmetrical positions within the homologous arms, yielding a 5'-phosphate and a 3'-hydroxyl group; requires a central core of homology in the junction. The consensus cleavage sequence is 5'-(A/T)TT(C/G)-3'. Cleavage occurs on the 3'-side of the TT dinucleotide at the point of strand exchange. HJ branch migration catalyzed by RuvA-RuvB allows RuvC to scan DNA until it finds its consensus sequence, where it cleaves and resolves the cruciform DNA. The polypeptide is Crossover junction endodeoxyribonuclease RuvC (Pseudoalteromonas translucida (strain TAC 125)).